The chain runs to 65 residues: Movement protein TGBp3 (65 aa).

The Lumenal segment spans residues 1 to 6 (MLPKMQ). Residues 7–26 (PSAQCLIVFSLAFVLGWYVL) traverse the membrane as a helical segment. At 27–65 (RPGNTSCVLLITGESVRLVNCELTKDLVEAVLLRPLKHL) the chain is on the cytoplasmic side.

This sequence belongs to the Tymovirales TGBp3 protein family.

It localises to the host endoplasmic reticulum membrane. Its function is as follows. Plays a role in viral cell-to-cell propagation, by facilitating genome transport to neighboring plant cells through plasmosdesmata. May induce the formation of granular vesicles derived from the Endoplasmic reticulum, which align on actin filaments. This Potato virus S (strain Peruvian) protein is Movement protein TGBp3.